Here is a 348-residue protein sequence, read N- to C-terminus: MSDDKSKALAAALAQIEKSFGKGAIMKMDGSQQEENLEVISTGSLGLDLALGVGGLPRGRIVEIFGPESSGKTTLCLEAVAQCQKNGGVCAFVDAEHAFDPVYARKLGVKVEELYLSQPDTGEQALEICDTLVRSGGIDMVVVDSVAALVPKAEIEGDMGDSHVGLQARLMSQALRKLTGHIKKTNTLVVFINQIRMKIGVMFGSPETTTGGNALKFYSSVRLDIRRTGSIKKGEEVLGNETRVKVIKNKVAPPFRQAEFDILYGEGISWEGELIDIGVKNDIINKSGAWYSYNGAKIGQGKDNVRVWLKENPEIADEIDAKIRALNGIEMHITEGTQDETDGERPEE.

66 to 73 is an ATP binding site; it reads GPESSGKT.

The protein belongs to the RecA family.

It is found in the cytoplasm. In terms of biological role, can catalyze the hydrolysis of ATP in the presence of single-stranded DNA, the ATP-dependent uptake of single-stranded DNA by duplex DNA, and the ATP-dependent hybridization of homologous single-stranded DNAs. It interacts with LexA causing its activation and leading to its autocatalytic cleavage. The chain is Protein RecA from Neisseria meningitidis serogroup C / serotype 2a (strain ATCC 700532 / DSM 15464 / FAM18).